Reading from the N-terminus, the 185-residue chain is Ribosome-recycling factor (185 aa).

This sequence belongs to the RRF family.

The protein resides in the cytoplasm. In terms of biological role, responsible for the release of ribosomes from messenger RNA at the termination of protein biosynthesis. May increase the efficiency of translation by recycling ribosomes from one round of translation to another. The protein is Ribosome-recycling factor of Vibrio vulnificus (strain YJ016).